Consider the following 67-residue polypeptide: Beta-mammal toxin CeII9 (67 aa).

An LCN-type CS-alpha/beta domain is found at 1-66 (KEGYLVNHST…VWPLPKKTCN (66 aa)). 4 cysteine pairs are disulfide-bonded: cysteine 12–cysteine 65, cysteine 16–cysteine 41, cysteine 25–cysteine 46, and cysteine 29–cysteine 48.

It belongs to the long (4 C-C) scorpion toxin superfamily. Sodium channel inhibitor family. Beta subfamily. As to expression, expressed by the venom gland.

Its subcellular location is the secreted. Functionally, beta toxins bind at site-4 of sodium channels and shift the voltage of activation toward more negative potentials thereby affecting sodium channel activation and promoting spontaneous and repetitive firing. This toxin is active against mammals and lethal to mice. Selectively modulates Nav1.4/SCN4A, a sodium channel present in both denervated and innervated skeletal muscle. The sequence is that of Beta-mammal toxin CeII9 from Centruroides elegans (Bark scorpion).